We begin with the raw amino-acid sequence, 362 residues long: sn-glycerol-3-phosphate import ATP-binding protein UgpC (362 aa).

Residues 4–235 form the ABC transporter domain; it reads LSFRNVKKTY…PASTFVAGFI (232 aa). Position 37–44 (37–44) interacts with ATP; the sequence is GPSGCGKS.

The protein belongs to the ABC transporter superfamily. sn-glycerol-3-phosphate importer (TC 3.A.1.1.3) family. In terms of assembly, the complex is composed of two ATP-binding proteins (UgpC), two transmembrane proteins (UgpA and UgpE) and a solute-binding protein (UgpB).

The protein resides in the cell inner membrane. The catalysed reaction is sn-glycerol 3-phosphate(out) + ATP + H2O = sn-glycerol 3-phosphate(in) + ADP + phosphate + H(+). Functionally, part of the ABC transporter complex UgpBAEC involved in sn-glycerol-3-phosphate (G3P) import. Responsible for energy coupling to the transport system. The polypeptide is sn-glycerol-3-phosphate import ATP-binding protein UgpC (Bordetella bronchiseptica (strain ATCC BAA-588 / NCTC 13252 / RB50) (Alcaligenes bronchisepticus)).